The primary structure comprises 67 residues: Conotoxin mr3d (67 aa).

A signal peptide spans 1 to 19 (MSKLGILLTICLLLFPLTA). The propeptide occupies 20 to 52 (VPLDGDQPADRPAERMQDDISSEHHPFFDPVKR). Disulfide bonds link cysteine 53–cysteine 65, cysteine 54–cysteine 62, and cysteine 58–cysteine 66. A 4-hydroxyproline; partial modification is found at proline 64. Cysteine 66 is subject to Cysteine amide; partial.

This sequence belongs to the conotoxin M superfamily. In terms of processing, has been found to be hydroxylated and amidated by Han et al. (2006), and to be unmodified by Ju et al. (2022). In terms of tissue distribution, expressed by the venom duct.

Its subcellular location is the secreted. The sequence is that of Conotoxin mr3d from Conus marmoreus (Marble cone).